We begin with the raw amino-acid sequence, 100 residues long: Small ribosomal subunit protein uS14c (100 aa).

This sequence belongs to the universal ribosomal protein uS14 family. As to quaternary structure, part of the 30S ribosomal subunit.

It localises to the plastid. It is found in the chloroplast. Functionally, binds 16S rRNA, required for the assembly of 30S particles. The sequence is that of Small ribosomal subunit protein uS14c from Capsella bursa-pastoris (Shepherd's purse).